Consider the following 288-residue polypeptide: ATP synthase gamma chain (288 aa).

The protein belongs to the ATPase gamma chain family. F-type ATPases have 2 components, CF(1) - the catalytic core - and CF(0) - the membrane proton channel. CF(1) has five subunits: alpha(3), beta(3), gamma(1), delta(1), epsilon(1). CF(0) has three main subunits: a, b and c.

It is found in the cell inner membrane. Produces ATP from ADP in the presence of a proton gradient across the membrane. The gamma chain is believed to be important in regulating ATPase activity and the flow of protons through the CF(0) complex. The protein is ATP synthase gamma chain of Paracidovorax citrulli (strain AAC00-1) (Acidovorax citrulli).